We begin with the raw amino-acid sequence, 397 residues long: MIIAPKVRGFICTTTHPAGCEANVRQQIAYVKSKGPLANGPKRVLVIGASTGYGLASRITAAFGSDAATIGVFLEKAGTEKKPGSAGWYNSAAFDKAAKEAGLYSKSVNGDAFSDECRAKVVELIKADLGQVDMVVYSLASPVRKLPATGELIRSALKPIGEVYTATAVDTNKDELIEAHVEPANEEEIANTIKVMGGEDWELWLQALDQAGVLAEGVKTVAYSYIGTDITWPIYWHGTLGRAKEDLDRASSAIRQQLSSKNGTANVAVLKSVVTQASAAIPVMPLYIAMSFKLMKEQGIHEGCIEQIQRMFYTRLFDGEFVTDDAQRIRMDDWELRESVQQACRDLWPQVTTENLSQLTDYQGYKAEFLKLFGFGWEGVDYTADVNPEVNFDVVAM.

Residues 48 to 53 (GASTGY), 74 to 75 (LE), 111 to 112 (DA), and 139 to 140 (LA) contribute to the NAD(+) site. Tyrosine 225 contacts substrate. Tyrosine 235 serves as the catalytic Proton donor. NAD(+) contacts are provided by residues lysine 244 and 273 to 275 (VVT).

Belongs to the TER reductase family. Monomer.

The enzyme catalyses a 2,3-saturated acyl-[ACP] + NAD(+) = a (2E)-enoyl-[ACP] + NADH + H(+). It functions in the pathway lipid metabolism; fatty acid biosynthesis. Its function is as follows. Involved in the final reduction of the elongation cycle of fatty acid synthesis (FAS II). Catalyzes the reduction of a carbon-carbon double bond in an enoyl moiety that is covalently linked to an acyl carrier protein (ACP). The chain is Enoyl-[acyl-carrier-protein] reductase [NADH] from Tolumonas auensis (strain DSM 9187 / NBRC 110442 / TA 4).